A 426-amino-acid polypeptide reads, in one-letter code: Zinc finger protein 662 (426 aa).

The region spanning 1–44 (MLENYGAVASLAAFPFPKPALISQLERGETPWCSVPRGALDGEA) is the KRAB domain. 8 C2H2-type zinc fingers span residues 192-214 (YICE…QKTH), 220-242 (YGCK…QRIH), 248-270 (YECQ…QRIH), 276-298 (FECK…QRIH), 304-326 (YTCK…QRMH), 332-354 (YECK…QRVH), 360-382 (HECT…QRIH), and 388-410 (YKCN…QRRH).

Belongs to the krueppel C2H2-type zinc-finger protein family.

It is found in the nucleus. May be involved in transcriptional regulation. The polypeptide is Zinc finger protein 662 (ZNF662) (Homo sapiens (Human)).